Here is a 98-residue protein sequence, read N- to C-terminus: NADH-ubiquinone oxidoreductase chain 4L (98 aa).

3 helical membrane passes run 2–22 (PSISTNIVLAFITALLGMLIF), 29–49 (SLLCLEGMMLSMFILSTLTIL), and 61–81 (ILLLVFAACEAAVGLALLVTV).

This sequence belongs to the complex I subunit 4L family. In terms of assembly, core subunit of respiratory chain NADH dehydrogenase (Complex I) which is composed of 45 different subunits.

The protein localises to the mitochondrion inner membrane. It catalyses the reaction a ubiquinone + NADH + 5 H(+)(in) = a ubiquinol + NAD(+) + 4 H(+)(out). In terms of biological role, core subunit of the mitochondrial membrane respiratory chain NADH dehydrogenase (Complex I) which catalyzes electron transfer from NADH through the respiratory chain, using ubiquinone as an electron acceptor. Part of the enzyme membrane arm which is embedded in the lipid bilayer and involved in proton translocation. This is NADH-ubiquinone oxidoreductase chain 4L (MT-ND4L) from Eulemur rubriventer (Red-bellied lemur).